Reading from the N-terminus, the 37-residue chain is Cytochrome b6-f complex subunit 5 (37 aa).

Residues 5–25 (LLCGIVLGLIPITLAGLFMAA) form a helical membrane-spanning segment.

This sequence belongs to the PetG family. The 4 large subunits of the cytochrome b6-f complex are cytochrome b6, subunit IV (17 kDa polypeptide, PetD), cytochrome f and the Rieske protein, while the 4 small subunits are PetG, PetL, PetM and PetN. The complex functions as a dimer.

Its subcellular location is the cellular thylakoid membrane. Component of the cytochrome b6-f complex, which mediates electron transfer between photosystem II (PSII) and photosystem I (PSI), cyclic electron flow around PSI, and state transitions. PetG is required for either the stability or assembly of the cytochrome b6-f complex. The polypeptide is Cytochrome b6-f complex subunit 5 (Synechococcus elongatus (strain ATCC 33912 / PCC 7942 / FACHB-805) (Anacystis nidulans R2)).